A 338-amino-acid chain; its full sequence is Aspartate carbamoyltransferase catalytic subunit (338 aa).

Residues R72 and T73 each contribute to the carbamoyl phosphate site. An L-aspartate-binding site is contributed by K100. 3 residues coordinate carbamoyl phosphate: R122, H152, and Q155. Residues R186 and R243 each contribute to the L-aspartate site. G284 and P285 together coordinate carbamoyl phosphate.

Belongs to the aspartate/ornithine carbamoyltransferase superfamily. ATCase family. Heterododecamer (2C3:3R2) of six catalytic PyrB chains organized as two trimers (C3), and six regulatory PyrI chains organized as three dimers (R2).

The catalysed reaction is carbamoyl phosphate + L-aspartate = N-carbamoyl-L-aspartate + phosphate + H(+). The protein operates within pyrimidine metabolism; UMP biosynthesis via de novo pathway; (S)-dihydroorotate from bicarbonate: step 2/3. Functionally, catalyzes the condensation of carbamoyl phosphate and aspartate to form carbamoyl aspartate and inorganic phosphate, the committed step in the de novo pyrimidine nucleotide biosynthesis pathway. The protein is Aspartate carbamoyltransferase catalytic subunit of Acinetobacter baumannii (strain AB307-0294).